A 347-amino-acid polypeptide reads, in one-letter code: UDP-3-O-acylglucosamine N-acyltransferase 1 (347 aa).

The Proton acceptor role is filled by His-246.

Belongs to the transferase hexapeptide repeat family. LpxD subfamily. Homotrimer.

It catalyses the reaction a UDP-3-O-[(3R)-3-hydroxyacyl]-alpha-D-glucosamine + a (3R)-hydroxyacyl-[ACP] = a UDP-2-N,3-O-bis[(3R)-3-hydroxyacyl]-alpha-D-glucosamine + holo-[ACP] + H(+). It participates in bacterial outer membrane biogenesis; LPS lipid A biosynthesis. Functionally, catalyzes the N-acylation of UDP-3-O-acylglucosamine using 3-hydroxyacyl-ACP as the acyl donor. Is involved in the biosynthesis of lipid A, a phosphorylated glycolipid that anchors the lipopolysaccharide to the outer membrane of the cell. In Francisella tularensis subsp. tularensis (strain SCHU S4 / Schu 4), this protein is UDP-3-O-acylglucosamine N-acyltransferase 1.